Consider the following 431-residue polypeptide: CinA-like protein (431 aa).

It belongs to the CinA family.

The chain is CinA-like protein from Chlorobium luteolum (strain DSM 273 / BCRC 81028 / 2530) (Pelodictyon luteolum).